Consider the following 431-residue polypeptide: Cleavage stimulation factor subunit 1 (431 aa).

6 WD repeats span residues 106–145 (SHKG…AKSA), 171–210 (DHVD…AKRA), 215–254 (QEAE…CFVS), 260–301 (QHTD…TTFE), 303–343 (AHDG…TLVR), and 395–431 (GHNN…STTD).

In terms of assembly, homodimer. The CSTF complex is composed of CSTF1 (50 kDa subunit), CSTF2 (64 kDa subunit) and CSTF3 (77 kDa subunit). Interacts (via repeats WD) directly with CSTF3. Interacts (via repeat WD6) with BARD1. Interacts with ERCC6.

It is found in the nucleus. Its function is as follows. One of the multiple factors required for polyadenylation and 3'-end cleavage of mammalian pre-mRNAs. May be responsible for the interaction of CSTF with other factors to form a stable complex on the pre-mRNA. This is Cleavage stimulation factor subunit 1 (Cstf1) from Mus musculus (Mouse).